Reading from the N-terminus, the 375-residue chain is G-protein coupled estrogen receptor 1 (375 aa).

Met-1 bears the N-acetylmethionine mark. Residues 1 to 62 (MDVTSQARGV…QQYVIGLFLS (62 aa)) are Extracellular-facing. N-linked (GlcNAc...) asparagine glycosylation is found at Asn-25, Asn-32, and Asn-44. A helical transmembrane segment spans residues 63–84 (CLYTIFLFPIGFVGNILILVVN). Over 85–96 (ISFREKMTIPDL) the chain is Cytoplasmic. A helical membrane pass occupies residues 97 to 120 (YFINLAVADLILVADSLIEVFNLH). Topologically, residues 121–132 (ERYYDIAVLCTF) are extracellular. Cys-130 and Cys-207 are joined by a disulfide. A helical transmembrane segment spans residues 133–153 (MSLFLQVNMYSSVFFLTWMSF). At 154 to 175 (DRYIALARAMRCSLFRTKHHAR) the chain is on the cytoplasmic side. A helical membrane pass occupies residues 176–194 (LSCGLIWMASVSATLVPFT). At 195-220 (AVHLQHTDEACFCFADVREVQWLEVT) the chain is on the extracellular side. A helical transmembrane segment spans residues 221–236 (LGFIVPFAIIGLCYSL). Residues 237–259 (IVRVLVRAHRHRGLRPRRQKALR) lie on the Cytoplasmic side of the membrane. Residues 260-280 (MILAVVLVFFVCWLPENVFIS) traverse the membrane as a helical segment. Topologically, residues 281–306 (VHLLQRTQPGAAPCKQSFRHAHPLTG) are extracellular. The helical transmembrane segment at 307 to 327 (HIVNLAAFSNSCLNPLIYSFL) threads the bilayer. Topologically, residues 328 to 375 (GETFRDKLRLYIEQKTNLPALNRFCHAALKAVIPDSTEQSDVRFSSAV) are cytoplasmic.

It belongs to the G-protein coupled receptor 1 family. As to quaternary structure, homodimer. Heterodimer; heterodimerizes with other G-protein-coupled receptor (GPCRs) like CRHR1, HTR1A and PAQR8. Interacts (via C-terminus tail motif) with DLG4 (via N-terminus tandem pair of PDZ domains); the interaction is direct and induces the increase of GPER1 protein levels residing at the plasma membrane surface in a estradiol-independent manner. Interacts with RAMP3; the interaction confers proper subcellular localization and function in cardioprotection. Interacts with KRT7 and KRT8. Interacts with EGFR; the interaction increases after agonist-induced stimulation in cancer-associated fibroblasts (CAF). Interacts with EGFR and ESR1. Post-translationally, ubiquitinated; ubiquitination occurs at the plasma membrane and leads to proteasome-mediated degradation. In terms of processing, glycosylated. Expressed in placenta, endothelial and epithelial cells, non laboring and laboring term myometrium, fibroblasts and cancer-associated fibroblasts (CAF), prostate cancer cells and invasive adenocarcinoma (at protein level). Ubiquitously expressed, but is most abundant in placenta. In brain regions, expressed as a 2.8 kb transcript in basal forebrain, frontal cortex, thalamus, hippocampus, caudate and putamen.

It localises to the nucleus. Its subcellular location is the cytoplasm. It is found in the perinuclear region. The protein localises to the cytoskeleton. The protein resides in the cell membrane. It localises to the basolateral cell membrane. Its subcellular location is the cytoplasmic vesicle membrane. It is found in the early endosome. The protein localises to the recycling endosome. The protein resides in the golgi apparatus membrane. It localises to the golgi apparatus. Its subcellular location is the trans-Golgi network. It is found in the endoplasmic reticulum membrane. The protein localises to the cell projection. The protein resides in the dendrite. It localises to the dendritic spine membrane. Its subcellular location is the axon. It is found in the postsynaptic density. The protein localises to the mitochondrion membrane. Functionally, G-protein coupled estrogen receptor that binds to 17-beta-estradiol (E2) with high affinity, leading to rapid and transient activation of numerous intracellular signaling pathways. Stimulates cAMP production, calcium mobilization and tyrosine kinase Src inducing the release of heparin-bound epidermal growth factor (HB-EGF) and subsequent transactivation of the epidermal growth factor receptor (EGFR), activating downstream signaling pathways such as PI3K/Akt and ERK/MAPK. Mediates pleiotropic functions among others in the cardiovascular, endocrine, reproductive, immune and central nervous systems. Has a role in cardioprotection by reducing cardiac hypertrophy and perivascular fibrosis in a RAMP3-dependent manner. Regulates arterial blood pressure by stimulating vasodilation and reducing vascular smooth muscle and microvascular endothelial cell proliferation. Plays a role in blood glucose homeostasis contributing to the insulin secretion response by pancreatic beta cells. Triggers mitochondrial apoptosis during pachytene spermatocyte differentiation. Stimulates uterine epithelial cell proliferation. Enhances uterine contractility in response to oxytocin. Contributes to thymic atrophy by inducing apoptosis. Attenuates TNF-mediated endothelial expression of leukocyte adhesion molecules. Promotes neuritogenesis in developing hippocampal neurons. Plays a role in acute neuroprotection against NMDA-induced excitotoxic neuronal death. Increases firing activity and intracellular calcium oscillations in luteinizing hormone-releasing hormone (LHRH) neurons. Inhibits early osteoblast proliferation at growth plate during skeletal development. Inhibits mature adipocyte differentiation and lipid accumulation. Involved in the recruitment of beta-arrestin 2 ARRB2 at the plasma membrane in epithelial cells. Also functions as a receptor for aldosterone mediating rapid regulation of vascular contractibility through the PI3K/ERK signaling pathway. Involved in cancer progression regulation. Stimulates cancer-associated fibroblast (CAF) proliferation by a rapid genomic response through the EGFR/ERK transduction pathway. Associated with EGFR, may act as a transcription factor activating growth regulatory genes (c-fos, cyclin D1). Promotes integrin alpha-5/beta-1 and fibronectin (FN) matrix assembly in breast cancer cells. This chain is G-protein coupled estrogen receptor 1, found in Homo sapiens (Human).